The following is a 725-amino-acid chain: A-agglutinin anchorage subunit (725 aa).

Residues 1-24 form the signal peptide; that stretch reads MTLSFAHFTYLFTILLGLTNIALA. Tandem repeats lie at residues 53-149, 182-188, 189-195, 196-202, 203-209, 210-216, 217-223, 224-230, 231-237, 238-244, 245-251, 252-258, 259-265, 266-272, 273-279, 280-286, 287-293, 294-300, and 301-307. The 2 X approximate repeats stretch occupies residues 53 to 493; the sequence is VSTSTIVQAG…TSHSYSSVQT (441 aa). 2 disordered regions span residues 168 to 318 and 335 to 363; these read PVTS…TSIS and SSTSVSLYSPSTPVYSVPSTSSNVATPSM. The interval 182 to 307 is 18 X approximate tandem repeats, Ser/Thr-rich; that stretch reads TTTSLSSTST…PSLTSSSPTL (126 aa). The stretch at 395–493 is one 1-2 repeat; sequence MSTYFTTVSG…TSHSYSSVQT (99 aa). G699 is lipidated: GPI-anchor amidated glycine. Positions 700-725 are cleaved as a propeptide — removed in mature form; the sequence is SGSQTRLPLGKLVFAIMAVACNVIFS.

Heterodimer; disulfide-linked. Extensively O-glycosylated by PMT1 and PMT2. In terms of processing, the GPI-anchor is attached to the protein in the endoplasmic reticulum and serves to target the protein to the cell surface. There, the glucosamine-inositol phospholipid moiety is cleaved off and the GPI-modified mannoprotein is covalently attached via its lipidless GPI glycan remnant to the 1,6-beta-glucan of the outer cell wall layer.

It localises to the secreted. It is found in the cell wall. The protein resides in the membrane. Its function is as follows. Cell wall anchoring subunit of the a-agglutinin heterodimer. S.cerevisiae a and alpha cells express the complementary cell surface glycoproteins a-agglutinin and alpha-agglutinin, respectively, which interact with one another to promote cellular aggregation during mating. This is A-agglutinin anchorage subunit (AGA1) from Saccharomyces cerevisiae (strain ATCC 204508 / S288c) (Baker's yeast).